Consider the following 207-residue polypeptide: A-type ATP synthase subunit E (207 aa).

Belongs to the V-ATPase E subunit family. Has multiple subunits with at least A(3), B(3), C, D, E, F, H, I and proteolipid K(x).

The protein resides in the cell membrane. Its function is as follows. Component of the A-type ATP synthase that produces ATP from ADP in the presence of a proton gradient across the membrane. This chain is A-type ATP synthase subunit E, found in Methanosphaera stadtmanae (strain ATCC 43021 / DSM 3091 / JCM 11832 / MCB-3).